The primary structure comprises 155 residues: Small ribosomal subunit protein uS7c (155 aa).

It belongs to the universal ribosomal protein uS7 family. As to quaternary structure, part of the 30S ribosomal subunit.

It is found in the plastid. The protein resides in the chloroplast. One of the primary rRNA binding proteins, it binds directly to 16S rRNA where it nucleates assembly of the head domain of the 30S subunit. This is Small ribosomal subunit protein uS7c (rps7) from Houttuynia cordata (Chameleon plant).